We begin with the raw amino-acid sequence, 127 residues long: Gamma-synuclein (127 aa).

2 tandem repeats follow at residues 20-30 (EKTKQGVTEAA) and 31-41 (EKTKEGVMYVG). A 4 X 11 AA tandem repeats of [EGSA]-K-T-K-[EQ]-[GQ]-V-X(4) region spans residues 20–67 (EKTKQGVTEAAEKTKEGVMYVGAKTKENVVQSVTSVAEKTKEQANAVS). Residues 42–56 (AKTKENVVQSVTSVA) form a 3; approximate repeat. Repeat 4 spans residues 57 to 67 (EKTKEQANAVS). A phosphoserine mark is found at serine 67 and serine 72. Positions 96–127 (RKEDLRPSAPQQEGEASKEKEEVAEEAQSGGD) are disordered. Serine 124 carries the post-translational modification Phosphoserine; by BARK1, CaMK2 and CK2.

This sequence belongs to the synuclein family. May be a centrosome-associated protein. Interacts with MYOC; affects its secretion and its aggregation. In terms of processing, phosphorylated. Phosphorylation by GRK5 appears to occur on residues distinct from the residue phosphorylated by other kinases. In terms of tissue distribution, highly expressed in brain, particularly in the substantia nigra. Also expressed in the corpus callosum, heart, skeletal muscle, ovary, testis, colon and spleen. Weak expression in pancreas, kidney and lung.

The protein localises to the cytoplasm. Its subcellular location is the perinuclear region. It is found in the cytoskeleton. It localises to the microtubule organizing center. The protein resides in the centrosome. The protein localises to the spindle. Plays a role in neurofilament network integrity. May be involved in modulating axonal architecture during development and in the adult. In vitro, increases the susceptibility of neurofilament-H to calcium-dependent proteases. May also function in modulating the keratin network in skin. Activates the MAPK and Elk-1 signal transduction pathway. The protein is Gamma-synuclein (SNCG) of Homo sapiens (Human).